The following is a 177-amino-acid chain: Immunity protein CdiI-YPIII (177 aa).

As to quaternary structure, interacts with the C-terminal DNase fragment (residues 954-1077) of cognate toxin CdiA-YPIII.

Immunity protein component of a toxin-immunity protein module, which functions as a cellular contact-dependent growth inhibition (CDI) system. CDI modules allow bacteria to communicate with and inhibit the growth of closely related neighboring bacteria in a contact-dependent fashion. Neutralizes the toxic activity of cognate toxin CdiA-YPIII (residues 954-1077). Does not inhibit toxic activity of CdiA from other toxin-immunity modules. The polypeptide is Immunity protein CdiI-YPIII (Yersinia pseudotuberculosis serotype O:3 (strain YPIII)).